Here is a 494-residue protein sequence, read N- to C-terminus: Alpha-amylase-related protein (494 aa).

A signal peptide spans 1 to 20; sequence MFKFAAAVILCLVAASSTLA. Residue glutamine 21 is modified to Pyrrolidone carboxylic acid. Residues cysteine 48 and cysteine 104 are joined by a disulfide bond. Ca(2+)-binding residues include asparagine 118, glutamine 169, and aspartate 178. Cysteine 157 and cysteine 171 are disulfide-bonded. Arginine 206 is a chloride binding site. Catalysis depends on aspartate 208, which acts as the Nucleophile. Histidine 212 provides a ligand contact to Ca(2+). Glutamate 245 acts as the Proton donor in catalysis. Chloride-binding residues include asparagine 308 and arginine 343. 3 cysteine pairs are disulfide-bonded: cysteine 376/cysteine 382, cysteine 418/cysteine 441, and cysteine 448/cysteine 460.

The protein belongs to the glycosyl hydrolase 13 family. In terms of assembly, monomer. It depends on Ca(2+) as a cofactor. Chloride is required as a cofactor.

Its subcellular location is the secreted. It carries out the reaction Endohydrolysis of (1-&gt;4)-alpha-D-glucosidic linkages in polysaccharides containing three or more (1-&gt;4)-alpha-linked D-glucose units.. In Drosophila atripex (Fruit fly), this protein is Alpha-amylase-related protein (Amyrel).